Consider the following 343-residue polypeptide: MKDLDWNNLGFSYIKTDYRFIAHWKDGKWDEGKLTTDSTLHIHEGSTALHYGQQCFEGLKAYRCKDGSINLFRPQANAERMQRTADRLLMPRVPTELFVRACKEVVKANQDWLGPYGSGATLYLRPFLIGVGENIGVKTAPEFIFSVFCCPVGAYFKGGLAPSNFITTDYDRAAPMGTGGVKVGGNYAASLLPHELAAEQGTPERKFADAIYLDPKTHTKIEEVGAANFFGITKDNKFITPKSESILPSITKYSLLHIAKERLGMEAIEGDVYIDQLDQFVEAGACGTAAVITPVGGIQHNGKFHVFDSETEVGPVTRRLYDELTGIQFGDIEAPEGWIVKVE.

K182 is subject to N6-(pyridoxal phosphate)lysine.

The protein belongs to the class-IV pyridoxal-phosphate-dependent aminotransferase family. Pyridoxal 5'-phosphate serves as cofactor.

It carries out the reaction L-leucine + 2-oxoglutarate = 4-methyl-2-oxopentanoate + L-glutamate. It catalyses the reaction L-isoleucine + 2-oxoglutarate = (S)-3-methyl-2-oxopentanoate + L-glutamate. The catalysed reaction is L-valine + 2-oxoglutarate = 3-methyl-2-oxobutanoate + L-glutamate. It participates in amino-acid biosynthesis; L-isoleucine biosynthesis; L-isoleucine from 2-oxobutanoate: step 4/4. It functions in the pathway amino-acid biosynthesis; L-leucine biosynthesis; L-leucine from 3-methyl-2-oxobutanoate: step 4/4. The protein operates within amino-acid biosynthesis; L-valine biosynthesis; L-valine from pyruvate: step 4/4. In terms of biological role, acts on leucine, isoleucine and valine. This is Branched-chain-amino-acid aminotransferase (ilvE) from Haemophilus influenzae (strain ATCC 51907 / DSM 11121 / KW20 / Rd).